We begin with the raw amino-acid sequence, 250 residues long: Aquaporin TIP2-2 (250 aa).

The next 2 helical transmembrane spans lie at 22-42 (VAEFIATLLFVFAGVGSAIAF) and 54-74 (AGLVAIAVAHALALFVGVSVA). The short motif at 83–85 (NPA) is the NPA 1 element. The next 3 helical transmembrane spans lie at 97 to 119 (TVLTGLFYWVAQLLGASVACLLL), 142 to 162 (GVVFEIVITFALVYTVYATAA), and 169 to 189 (LGTIAPIAIGFIVGANILAAG). Residues 197 to 199 (NPA) carry the NPA 2 motif. Residues 218 to 238 (WVGPLIGGGLAGLVYGDVFIG) form a helical membrane-spanning segment.

It belongs to the MIP/aquaporin (TC 1.A.8) family. TIP (TC 1.A.8.10) subfamily.

It is found in the vacuole membrane. Its function is as follows. Aquaporins facilitate the transport of water and small neutral solutes across cell membranes. In Zea mays (Maize), this protein is Aquaporin TIP2-2 (TIP2-2).